The sequence spans 356 residues: HORMA domain-containing protein 1 (356 aa).

Residues 24 to 225 (QQSLVLVKKL…TPFHSIKMNV (202 aa)) enclose the HORMA domain. Disordered stretches follow at residues 282–305 (ETQE…PKMD) and 333–356 (QLEF…SVPK). Basic and acidic residues predominate over residues 288 to 298 (EQPHRHTKEDF). Positions 347–356 (PKRRKVSVPK) are enriched in basic residues.

It is found in the nucleus. The protein resides in the chromosome. Functionally, plays a key role in meiotic progression by ensuring that sufficient numbers of processed DNA double-strand breaks (DSBs) are available for successful homology search, promoting synaptonemal-complex formation independently and playing key role in the male mid-pachytene checkpoint and the female meiotic prophase checkpoint. This is HORMA domain-containing protein 1 (hormad1) from Danio rerio (Zebrafish).